Reading from the N-terminus, the 464-residue chain is Fumarate hydratase class II 1 (464 aa).

Substrate contacts are provided by residues 96 to 98 (SGT), 127 to 130 (HPND), 137 to 139 (SSN), and threonine 185. Histidine 186 functions as the Proton donor/acceptor in the catalytic mechanism. Serine 316 is an active-site residue. Residues serine 317 and 322 to 324 (KVN) each bind substrate.

It belongs to the class-II fumarase/aspartase family. Fumarase subfamily. As to quaternary structure, homotetramer.

Its subcellular location is the cytoplasm. It catalyses the reaction (S)-malate = fumarate + H2O. It functions in the pathway carbohydrate metabolism; tricarboxylic acid cycle; (S)-malate from fumarate: step 1/1. In terms of biological role, involved in the TCA cycle. Catalyzes the stereospecific interconversion of fumarate to L-malate. This Pseudomonas aeruginosa (strain ATCC 15692 / DSM 22644 / CIP 104116 / JCM 14847 / LMG 12228 / 1C / PRS 101 / PAO1) protein is Fumarate hydratase class II 1.